The chain runs to 117 residues: Transcription elongation factor SPT4 (117 aa).

At Ala2 the chain carries N-acetylalanine. The segment at 2-40 (ALETVPKDLRHLRACLLCSLVKTIDQFEYDGCDNCDAYL) is interaction with SUPT5H. Residues Cys16, Cys19, Cys33, and Cys36 each contribute to the Zn(2+) site. A C4-type zinc finger spans residues 16 to 36 (CLLCSLVKTIDQFEYDGCDNC).

This sequence belongs to the SPT4 family. As to quaternary structure, interacts with SUPT5H to form DSIF. DSIF interacts with the positive transcription elongation factor b complex (P-TEFb complex), which is composed of CDK9 and cyclin-T (CCNT1 or CCNT2). DSIF interacts with RNA polymerase II, and this interaction is reduced by phosphorylation of the C-terminal domain (CTD) of POLR2A by P-TEFb. DSIF also interacts with the NELF complex, which is composed of NELFA, NELFB, NELFD and NELFE, and this interaction occurs following prior binding of DSIF to RNA polymerase II. DSIF also interacts with PRMT1/HRMT1L2, TATSF1, RNGTT/CAP1A, PRMT5/SKB1, SUPT6H, and can interact with PIN1. Ubiquitinated by UBR5 when not assembled in the DSIF complex, leading to its degradation: UBR5 recognizes and binds a degron that is not accessible when SUPT4H1 is part of the DSIF complex.

The protein localises to the nucleus. In terms of biological role, component of the DRB sensitivity-inducing factor complex (DSIF complex), which regulates mRNA processing and transcription elongation by RNA polymerase II. DSIF positively regulates mRNA capping by stimulating the mRNA guanylyltransferase activity of RNGTT/CAP1A. DSIF also acts cooperatively with the negative elongation factor complex (NELF complex) to enhance transcriptional pausing at sites proximal to the promoter. Transcriptional pausing may facilitate the assembly of an elongation competent RNA polymerase II complex. DSIF and NELF promote pausing by inhibition of the transcription elongation factor TFIIS/S-II. TFIIS/S-II binds to RNA polymerase II at transcription pause sites and stimulates the weak intrinsic nuclease activity of the enzyme. Cleavage of blocked transcripts by RNA polymerase II promotes the resumption of transcription from the new 3' terminus and may allow repeated attempts at transcription through natural pause sites. The sequence is that of Transcription elongation factor SPT4 (SUPT4H1) from Pongo abelii (Sumatran orangutan).